We begin with the raw amino-acid sequence, 413 residues long: PCI domain-containing protein 2 homolog (413 aa).

Residues 222–403 enclose the PCI domain; it reads VAYNYFLGRK…QKLVISKMNA (182 aa).

The protein belongs to the CSN12 family.

The chain is PCI domain-containing protein 2 homolog from Caenorhabditis elegans.